Reading from the N-terminus, the 247-residue chain is Probable phosphatase Shew_1420 (247 aa).

H8, H10, H16, H41, E74, H102, H132, D193, and H195 together coordinate Zn(2+).

This sequence belongs to the PHP family. It depends on Zn(2+) as a cofactor.

The sequence is that of Probable phosphatase Shew_1420 from Shewanella loihica (strain ATCC BAA-1088 / PV-4).